Reading from the N-terminus, the 330-residue chain is Protoheme IX farnesyltransferase (330 aa).

The next 9 helical transmembrane spans lie at 30–50, 58–78, 106–126, 127–147, 155–175, 182–202, 228–248, 249–269, and 281–301; these read LVKPKIIALLLMTTAGAMWMA, FFITLLGGGIAAAAANVINMV, LIFSGILALAAFGLLAIFTNL, LAAGLAMSGILVYVGVYTHWL, IVIGGAAGAIPPLVGWAATTG, WVMFAIIFLWTPPHFWALAIL, ILLYALLMVPVSLLLVYPLGM, LGSFYLSAAALLGSLLVWKAV, and AASLFTFANLYLLLLCGAMGL.

Belongs to the UbiA prenyltransferase family. Protoheme IX farnesyltransferase subfamily.

Its subcellular location is the cell inner membrane. It catalyses the reaction heme b + (2E,6E)-farnesyl diphosphate + H2O = Fe(II)-heme o + diphosphate. The protein operates within porphyrin-containing compound metabolism; heme O biosynthesis; heme O from protoheme: step 1/1. In terms of biological role, converts heme B (protoheme IX) to heme O by substitution of the vinyl group on carbon 2 of heme B porphyrin ring with a hydroxyethyl farnesyl side group. This chain is Protoheme IX farnesyltransferase, found in Synechococcus sp. (strain JA-2-3B'a(2-13)) (Cyanobacteria bacterium Yellowstone B-Prime).